Reading from the N-terminus, the 288-residue chain is Very-long-chain (3R)-3-hydroxyacyl-CoA dehydratase 1 (288 aa).

The tract at residues 1 to 59 (MGRLTEAAAAGGGASAARSAGPPPAPLPLSSTSPGCAAAMASSEEDGTNGGASEASDER) is disordered. The Cytoplasmic segment spans residues 1 to 75 (MGRLTEAAAA…RRLGLLATIW (75 aa)). The chain crosses the membrane as a helical span at residues 76-95 (LTFYNIAMTAGWLVLAIAMV). The Lumenal portion of the chain corresponds to 96–114 (RFYMEKGTHKGLYKSIQKT). The chain crosses the membrane as a helical span at residues 115–131 (LKFFQTFALLEIVHCLI). Over 132 to 141 (GIVPTSVLVA) the chain is Cytoplasmic. A helical transmembrane segment spans residues 142–159 (GVQVSSRIFMVWLVTHSI). Topologically, residues 160–165 (KPIQNE) are lumenal. A helical membrane pass occupies residues 166–180 (ESVVLFLVAWTVTEI). Residues 181 to 203 (TRYSFYTFSLLDHLPYFIKWARY) lie on the Cytoplasmic side of the membrane. A helical transmembrane segment spans residues 204–221 (NFFIILYPVGVAGELLTI). Catalysis depends on residues tyrosine 210 and glutamate 217. At 222 to 251 (YAALPYVKKTGMFSIRLPNKYNVSFDYYYF) the chain is on the lumenal side. A glycan (N-linked (GlcNAc...) asparagine) is linked at asparagine 243. A helical transmembrane segment spans residues 252–269 (LLITMASYIPLFPQLYFH). At 270 to 288 (MLRQRRKVLHGEVIVEKDD) the chain is on the cytoplasmic side.

It belongs to the very long-chain fatty acids dehydratase HACD family. As to quaternary structure, may interact with enzymes of the ELO family (including ELOVL1); with those enzymes that mediate condensation, the first of the four steps of the reaction cycle responsible for fatty acids elongation, may be part of a larger fatty acids elongase complex. Interacts with TECR. Post-translationally, N-glycosylated. As to expression, expressed in heart.

It is found in the endoplasmic reticulum membrane. The catalysed reaction is a very-long-chain (3R)-3-hydroxyacyl-CoA = a very-long-chain (2E)-enoyl-CoA + H2O. It carries out the reaction (3R)-hydroxyhexadecanoyl-CoA = (2E)-hexadecenoyl-CoA + H2O. The enzyme catalyses (3R)-hydroxyoctadecanoyl-CoA = (2E)-octadecenoyl-CoA + H2O. It catalyses the reaction (3R)-hydroxyeicosanoyl-CoA = (2E)-eicosenoyl-CoA + H2O. The catalysed reaction is (3R)-hydroxydocosanoyl-CoA = (2E)-docosenoyl-CoA + H2O. It carries out the reaction (3R)-hydroxytetracosanoyl-CoA = (2E)-tetracosenoyl-CoA + H2O. The enzyme catalyses (3R)-hydroxyhexacosanoyl-CoA = (2E)-hexacosenoyl-CoA + H2O. It functions in the pathway lipid metabolism; fatty acid biosynthesis. Catalyzes the third of the four reactions of the long-chain fatty acids elongation cycle. This endoplasmic reticulum-bound enzymatic process, allows the addition of two carbons to the chain of long- and very long-chain fatty acids/VLCFAs per cycle. This enzyme catalyzes the dehydration of the 3-hydroxyacyl-CoA intermediate into trans-2,3-enoyl-CoA, within each cycle of fatty acid elongation. Thereby, it participates in the production of VLCFAs of different chain lengths that are involved in multiple biological processes as precursors of membrane lipids and lipid mediators. This is Very-long-chain (3R)-3-hydroxyacyl-CoA dehydratase 1 (HACD1) from Ovis aries (Sheep).